Consider the following 1027-residue polypeptide: Kinesin heavy chain isoform 5A (1027 aa).

At alanine 2 the chain carries N-acetylalanine. In terms of domain architecture, Kinesin motor spans 9–327 (SIKVLCRFRP…LMFGQRAKTI (319 aa)). 86–93 (GQTSSGKT) is a binding site for ATP. The segment at 174–315 (VSSPEEILDV…PSSYNDAETK (142 aa)) is microtubule-binding. Residues 271–361 (EGTKSYVPYR…KTKAQKETIA (91 aa)) form a necessary for interaction with ZFYVE27 region. Positions 331 to 905 (ASVNLELTAE…EVDRIKEAVR (575 aa)) form a coiled coil. Residues 353 to 1027 (TKAQKETIAK…FPLHQETAAS (675 aa)) form an interaction with BICD2 region. Threonine 397 carries the phosphothreonine modification. The disordered stretch occupies residues 906-936 (YKSSGKRGHSAQIAKPVRPGHYPASSPTNPY). Residues 907 to 1027 (KSSGKRGHSA…FPLHQETAAS (121 aa)) form a globular region.

The protein belongs to the TRAFAC class myosin-kinesin ATPase superfamily. Kinesin family. Kinesin subfamily. In terms of assembly, oligomer composed of two heavy chains and two light chains. Interacts with GRIP1. Interacts with FMR1 (via C-terminus); this interaction is increased in a mGluR-dependent manner. Interacts with BORCS5. Interacts with ZFYVE27. Interacts with VAPA, VAPB, SURF4, RAB11A (GDP-bound form), RAB11B (GDP-bound form) and RTN3 in a ZFYVE27-dependent manner. Interacts with BICD2. Interacts with DTNB. Expressed in brain.

It localises to the cytoplasm. The protein resides in the perinuclear region. It is found in the cytoskeleton. The protein localises to the perikaryon. It catalyses the reaction ATP + H2O + a kinesin associated with a microtubule at position (n) = ADP + phosphate a kinesin associated with a microtubule at position (n+1, toward the plus end).. Microtubule-dependent motor required for slow axonal transport of neurofilament proteins (NFH, NFM and NFL). Can induce formation of neurite-like membrane protrusions in non-neuronal cells in a ZFYVE27-dependent manner. The ZFYVE27-KIF5A complex contributes to the vesicular transport of VAPA, VAPB, SURF4, RAB11A, RAB11B and RTN3 proteins in neurons. Required for anterograde axonal transportation of MAPK8IP3/JIP3 which is essential for MAPK8IP3/JIP3 function in axon elongation. The chain is Kinesin heavy chain isoform 5A from Rattus norvegicus (Rat).